The chain runs to 145 residues: Bacilliredoxin BLi02578/BL01507 (145 aa).

This sequence belongs to the bacilliredoxin family.

The sequence is that of Bacilliredoxin BLi02578/BL01507 from Bacillus licheniformis (strain ATCC 14580 / DSM 13 / JCM 2505 / CCUG 7422 / NBRC 12200 / NCIMB 9375 / NCTC 10341 / NRRL NRS-1264 / Gibson 46).